Consider the following 388-residue polypeptide: Probable acetyl-CoA acetyltransferase (388 aa).

The active-site Acyl-thioester intermediate is the C84. K187 participates in a covalent cross-link: Isoglutamyl lysine isopeptide (Lys-Gln) (interchain with Q-Cter in protein Pup). Catalysis depends on proton acceptor residues H345 and C375.

Belongs to the thiolase-like superfamily. Thiolase family.

It catalyses the reaction 2 acetyl-CoA = acetoacetyl-CoA + CoA. The protein is Probable acetyl-CoA acetyltransferase of Mycolicibacterium smegmatis (strain ATCC 700084 / mc(2)155) (Mycobacterium smegmatis).